The following is a 958-amino-acid chain: Glucoamylase 1 (958 aa).

A signal peptide spans 1-22 (MIFLKLIKSIVIGLGLVSAIQA). N-linked (GlcNAc...) asparagine glycans are attached at residues asparagine 61, asparagine 78, asparagine 107, asparagine 197, asparagine 403, and asparagine 416. Active-site residues include aspartate 470 and glutamate 473. N-linked (GlcNAc...) asparagine glycans are attached at residues asparagine 513, asparagine 580, and asparagine 602. The active-site Proton donor is the aspartate 638. N-linked (GlcNAc...) asparagine glycans are attached at residues asparagine 813 and asparagine 907.

Belongs to the glycosyl hydrolase 31 family.

It catalyses the reaction Hydrolysis of terminal (1-&gt;4)-linked alpha-D-glucose residues successively from non-reducing ends of the chains with release of beta-D-glucose.. In terms of biological role, this glucoamylase has a specificity toward both alpha-1,4 and alpha-1,6 linkages. This chain is Glucoamylase 1 (GAM1), found in Schwanniomyces occidentalis (Yeast).